Here is a 236-residue protein sequence, read N- to C-terminus: Ubiquinone biosynthesis O-methyltransferase (236 aa).

Residues Arg39, Gly59, Asp80, and Met124 each coordinate S-adenosyl-L-methionine.

It belongs to the methyltransferase superfamily. UbiG/COQ3 family.

The catalysed reaction is a 3-demethylubiquinol + S-adenosyl-L-methionine = a ubiquinol + S-adenosyl-L-homocysteine + H(+). It carries out the reaction a 3-(all-trans-polyprenyl)benzene-1,2-diol + S-adenosyl-L-methionine = a 2-methoxy-6-(all-trans-polyprenyl)phenol + S-adenosyl-L-homocysteine + H(+). The protein operates within cofactor biosynthesis; ubiquinone biosynthesis. O-methyltransferase that catalyzes the 2 O-methylation steps in the ubiquinone biosynthetic pathway. This chain is Ubiquinone biosynthesis O-methyltransferase, found in Shewanella oneidensis (strain ATCC 700550 / JCM 31522 / CIP 106686 / LMG 19005 / NCIMB 14063 / MR-1).